Here is a 347-residue protein sequence, read N- to C-terminus: NAD-dependent alcohol dehydrogenase (347 aa).

Position 11 is an N6-methyllysine; partial (Lys-11). 7 residues coordinate Zn(2+): Cys-38, His-68, Glu-98, Cys-101, Cys-104, Cys-112, and Cys-154. An N6-methyllysine; partial modification is found at Lys-213.

The protein belongs to the zinc-containing alcohol dehydrogenase family. In terms of assembly, homodimer and homotetramer. The cofactor is Zn(2+).

The enzyme catalyses a primary alcohol + NAD(+) = an aldehyde + NADH + H(+). It carries out the reaction a secondary alcohol + NAD(+) = a ketone + NADH + H(+). The chain is NAD-dependent alcohol dehydrogenase (adh) from Saccharolobus solfataricus (strain ATCC 35092 / DSM 1617 / JCM 11322 / P2) (Sulfolobus solfataricus).